A 98-amino-acid chain; its full sequence is Large ribosomal subunit protein bL28 (98 aa).

The protein belongs to the bacterial ribosomal protein bL28 family.

This chain is Large ribosomal subunit protein bL28, found in Bartonella bacilliformis (strain ATCC 35685 / KC583 / Herrer 020/F12,63).